The chain runs to 308 residues: Methionyl-tRNA formyltransferase (308 aa).

A (6S)-5,6,7,8-tetrahydrofolate-binding site is contributed by 109-112 (SLLP).

It belongs to the Fmt family.

It catalyses the reaction L-methionyl-tRNA(fMet) + (6R)-10-formyltetrahydrofolate = N-formyl-L-methionyl-tRNA(fMet) + (6S)-5,6,7,8-tetrahydrofolate + H(+). Functionally, attaches a formyl group to the free amino group of methionyl-tRNA(fMet). The formyl group appears to play a dual role in the initiator identity of N-formylmethionyl-tRNA by promoting its recognition by IF2 and preventing the misappropriation of this tRNA by the elongation apparatus. In Salinispora tropica (strain ATCC BAA-916 / DSM 44818 / JCM 13857 / NBRC 105044 / CNB-440), this protein is Methionyl-tRNA formyltransferase.